A 419-amino-acid polypeptide reads, in one-letter code: tRNA (guanine-N(7)-)-methyltransferase non-catalytic subunit wuho (419 aa).

Residues 51–61 are compositionally biased toward low complexity; the sequence is STAEQQSAAAE. Residues 51-75 form a disordered region; it reads STAEQQSAAAETGGGSVVEGEEPKD. WD repeat units lie at residues 87 to 127, 174 to 213, and 217 to 255; these read APTV…AQLV, GHLSIVYDILWTGDQQHIITSDRDDKIRVTNYPATFDIHS, and GHKEFVSGLALLSDEHICSVSGDKTLRVWNFKAGKELLR.

This sequence belongs to the WD repeat TRM82 family. Forms a heterodimer with the catalytic subunit Mettl1. Interacts with mei-P26 and weakly interacts with bgcn; required for the function or formation of the mei-P26-bgcn-bam-sxl complex. Interacts with nanos; may be involved in mei-P26-dependent derepression of the BMP signaling pathway. Interacts with Myc; the interaction may be mediated by mei-P26 and may be involved in the regulation of ribosome biogenesis. In testis, it is present at high level in hub cells, a niche for germline stem cells of testis. Ubiquitously expressed in all testicular cells throughout spermatogenesis. Ubiquitously expressed in all germline and somatic cells of the ovary.

It is found in the nucleus. The protein resides in the cytoplasm. It participates in tRNA modification; N(7)-methylguanine-tRNA biosynthesis. Functionally, required for the Mettl1-dependent formation of N(7)-methylguanine at position 46 (m7G46) in tRNA. In the Mettl1-wuho methyltransferase complex, it is required to stabilize and induce conformational changes of the catalytic subunit. Required for binding of nanos mRNA and repression of translation by the mei-P26-bgcn-bam-sxl complex. May cooperate with mei-P26 and nanos to derepress the BMP signaling pathway. May cooperate with mei-P26 to suppress expression of a subset of microRNAs. May cooperate with mei-P26 to regulate bam expression levels in germline cells during gametogenesis. Required to promote mitosis to meiosis transition during gametogenesis. May regulate germline cell division in part by regulating ribosome biogenesis. In Drosophila willistoni (Fruit fly), this protein is tRNA (guanine-N(7)-)-methyltransferase non-catalytic subunit wuho.